We begin with the raw amino-acid sequence, 365 residues long: MSDEIVTNKSVTYVNNTTPVTITSSELDLRSCYQDDEVVIEVHAAALNPIDFITHQLCNSYIFGKYPKTYSRDYSGVIIKAGKDVDNRWKVGDKVNGMYSHIYGERGTLTHYLILNPAKDIPITHMVEVPKDENDPYDDFVYAAAWPLTFGTAFSTLYDFKKDWTSDSKVLVIGASTSVSYAFVHIAKNYFNIGTVVGICSKNSIERNKKLGYDYLVPYDEGSIVENVKKLKQIVLENDKFDMIFDSVGNHDFFPVIDQFLKPKAKNSFYVTIAGNNKANYKNISWRDFVSLSSILKAINPFKKYNWRFGHPYPPNNFIEVGNEMIKKGTYKPPIDSVYEFDQYKEAIDRLMSNRAKGKVVVKMK.

Belongs to the YIM1 family.

It is found in the lipid droplet. The protein resides in the mitochondrion. The chain is Protein YIM1 (YIM1) from Saccharomyces cerevisiae (strain RM11-1a) (Baker's yeast).